Here is a 262-residue protein sequence, read N- to C-terminus: Tryptophan synthase alpha chain (262 aa).

Residues Glu51 and Asp62 each act as proton acceptor in the active site.

The protein belongs to the TrpA family. As to quaternary structure, tetramer of two alpha and two beta chains.

It carries out the reaction (1S,2R)-1-C-(indol-3-yl)glycerol 3-phosphate + L-serine = D-glyceraldehyde 3-phosphate + L-tryptophan + H2O. It functions in the pathway amino-acid biosynthesis; L-tryptophan biosynthesis; L-tryptophan from chorismate: step 5/5. In terms of biological role, the alpha subunit is responsible for the aldol cleavage of indoleglycerol phosphate to indole and glyceraldehyde 3-phosphate. This Oceanobacillus iheyensis (strain DSM 14371 / CIP 107618 / JCM 11309 / KCTC 3954 / HTE831) protein is Tryptophan synthase alpha chain.